Consider the following 131-residue polypeptide: Protein DfrA (131 aa).

It belongs to the RutC family.

This is Protein DfrA (dfrA) from Myxococcus xanthus.